The chain runs to 188 residues: Tumor necrosis factor alpha-induced protein 8-like protein (188 aa).

It belongs to the TNFAIP8 family.

The polypeptide is Tumor necrosis factor alpha-induced protein 8-like protein (Drosophila pseudoobscura pseudoobscura (Fruit fly)).